The primary structure comprises 212 residues: Large ribosomal subunit protein uL3 (212 aa).

A disordered region spans residues 127-153; the sequence is FRGGPATHGQSDRHRAPGSIGSGTTPG.

The protein belongs to the universal ribosomal protein uL3 family. As to quaternary structure, part of the 50S ribosomal subunit. Forms a cluster with proteins L14 and L19.

Functionally, one of the primary rRNA binding proteins, it binds directly near the 3'-end of the 23S rRNA, where it nucleates assembly of the 50S subunit. This chain is Large ribosomal subunit protein uL3, found in Herpetosiphon aurantiacus (strain ATCC 23779 / DSM 785 / 114-95).